The following is a 982-amino-acid chain: MNAPHPASAALTQTLAARPTLAELEARDAFAERHIGPSPDEQAAMLATLGYASRAALIDAVIPPAIRRQDGMPLGEFTQPLTEEAALAKLRGIAGQNRVVRSLIGQGYYGTHTPGVILRNILENPAWYTAYTPYQPEISQGRLEAMLNFQQMVMDLTAMDIANASMLDEATAAAEAMTLLQRVGKHPSNVFFVADDVLPQTLDVVRTRAEPIGVQVVTGPAADAAKHNAFGVLLQYPGTGGALLGGLSTYQALTDAVHAAGGLVVAAADLLALTLLAAPGEWGADVVIGNTQRFGVPFGFGGPHAGYMAVRDAFKRSMPGRLVGVTVDAQGNPAYRLALQTREQHIRREKATSNICTAQVLLGVMASMYAVYHGPQGLKRIAQRVHRLTATLAAGLRQIGYTLEAGAFFDTLTVATGPRTANLHIAAQAHGFNLRQIDDGRLGVSLDETVTRAEVVALWEIFAHAAHAGAPDFDQVEAGIADAFPASLARQSAYLTHPVFNAHHSEHEMLRYLRSLADKDLALDRTMIPLGSCTMKLNATAEMLPVTWPEFANIHPFAPADQTVGYREMIDQLEQMLCAATGYAAVSLQPNAGSQGEYAGLLIIHAYHASRGESHRDVCLIPSSAHGTNPASAQMAGMKVVVVACDERGNVDLADLEKKAAEHSANLAAIMITYPSTHGVFEEGVKRVCEIVHSHGGQVYVDGANMNAMVGTAAPGHFGGDVSHLNLHKTFCIPHGGGGPGVGPVAVGAHLAPFLPGRAASGEDASQNIGAVSAAPFGSASILPISWMYIAMMGAAGLTAATEAAILSANYVARRLSPYYPVLYTGAHGLVAHECILDIRPLQKESGISNEDIAKRLMDFGFHAPTMSFPVPGTLMIEPTESEPKVELDRFIDAMIAIRGEVDQVISGAFDREDNPLKHAPHTAQVVMADDWSHRYTREQAAYPVASLRTRKYWPPVGRADNVYGDRNLFCACVPMSEYAQD.

K729 is subject to N6-(pyridoxal phosphate)lysine.

Belongs to the GcvP family. As to quaternary structure, the glycine cleavage system is composed of four proteins: P, T, L and H. Pyridoxal 5'-phosphate is required as a cofactor.

It catalyses the reaction N(6)-[(R)-lipoyl]-L-lysyl-[glycine-cleavage complex H protein] + glycine + H(+) = N(6)-[(R)-S(8)-aminomethyldihydrolipoyl]-L-lysyl-[glycine-cleavage complex H protein] + CO2. Its function is as follows. The glycine cleavage system catalyzes the degradation of glycine. The P protein binds the alpha-amino group of glycine through its pyridoxal phosphate cofactor; CO(2) is released and the remaining methylamine moiety is then transferred to the lipoamide cofactor of the H protein. The polypeptide is Glycine dehydrogenase (decarboxylating) (Ralstonia nicotianae (strain ATCC BAA-1114 / GMI1000) (Ralstonia solanacearum)).